The following is a 248-amino-acid chain: uncharacterized protein (248 aa).

This is an uncharacterized protein from Streptococcus pyogenes serotype M6 (strain ATCC BAA-946 / MGAS10394).